We begin with the raw amino-acid sequence, 446 residues long: MEASFVQTTMALGLSSKKASSRNVAVERKNLITVCRFSVKTLLEKYTAEPIDDSSEEFVNFAAILEQILSHRFKACAPAGPVSWFSSDGQRGFWDYIRLACSKVPNNCVSSIENMENISTARAKGRAWIRVALMEKRMSEYITTALRDTRTTRRFYDSGAIMLRDEATILTGMLIGLSAIDFSFCLKGEVLDGKTPVVIDYTPYLKFTQSYDYLTDEEERHSAESSTSEDNSPEHPYLPLVTDEDSWYSKWHKMEQKFRIVYAQKGYLEELVRLRESQLKDLEAENRRLQLQLEEAAAQNQREKRELEGVILELQEQLTGLIPSDHAPLAQGSKELTTPLVNQWPSLGTLNGAEGASNSKLYRRHSFMSTEPLSAEASLSSDSQRLGEGTRDEEPWGPIGKDPTPSMLGLCGSLASIPSCKSLASFKSNECLVSDSPEGSPALSPS.

Positions 1 to 298 (MEASFVQTTM…LQLQLEEAAA (298 aa)) are interaction with RAP2A. The region spanning 52–189 (DDSSEEFVNF…IDFSFCLKGE (138 aa)) is the RUN domain. Position 215 is a phosphothreonine (T215). The segment at 216–239 (DEEERHSAESSTSEDNSPEHPYLP) is disordered. A Phosphoserine modification is found at S232. Residues 267–322 (YLEELVRLRESQLKDLEAENRRLQLQLEEAAAQNQREKRELEGVILELQEQLTGLI) are a coiled coil. Over residues 372–384 (PLSAEASLSSDSQ) the composition is skewed to polar residues. Residues 372-404 (PLSAEASLSSDSQRLGEGTRDEEPWGPIGKDPT) are disordered. 2 positions are modified to phosphoserine: S416 and S419.

This sequence belongs to the RUNDC3 family. As to quaternary structure, interacts with the GTP-bound form of RAP2A.

May act as an effector of RAP2A in neuronal cells. The chain is RUN domain-containing protein 3A (RUNDC3A) from Homo sapiens (Human).